The sequence spans 321 residues: G-protein coupled receptor homolog ECRF3 (321 aa).

The Extracellular portion of the chain corresponds to 1–34; it reads MEVKLDFSSEDFSNYSYNYSGDIYYGDVAPCVVN. N-linked (GlcNAc...) asparagine; by host glycosylation is found at asparagine 14 and asparagine 18. Residues 35-51 traverse the membrane as a helical segment; that stretch reads FLISESALAFIYVLMFL. The Cytoplasmic portion of the chain corresponds to 52 to 76; it reads CNAIGNSLVLRTFLKYRAQAQSFDY. Residues 77–93 traverse the membrane as a helical segment; sequence LMMGFCLNSLFLAGYLL. The Extracellular portion of the chain corresponds to 94 to 124; sequence MRLLRMFEIFMNTELCKLEAFFLNLSIYWSP. N-linked (GlcNAc...) asparagine; by host glycosylation is present at asparagine 117. Residues 125–141 traverse the membrane as a helical segment; the sequence is FILVFISVLRCLLIFCA. Topologically, residues 142–149 are cytoplasmic; the sequence is TRLWVKKT. Residues 150-166 form a helical membrane-spanning segment; the sequence is LIGQVFLCCSFVLACFG. At 167–196 the chain is on the extracellular side; that stretch reads ALPHVMVTSYYEPSSCIEEDGVLTEQLRTK. Residues 197–215 form a helical membrane-spanning segment; sequence LNTFHTWYSFAGPLFITVI. The Cytoplasmic portion of the chain corresponds to 216-234; the sequence is CYSMSCYKLFKTKLSKRAE. Residues 235-251 form a helical membrane-spanning segment; sequence VVTIITMTTLLFIVFCI. The Extracellular segment spans residues 252–286; sequence PYYIMESIDTLLRVGVIEETCAKRSAIVYGIQCTY. A helical transmembrane segment spans residues 287–303; it reads MLLVLYYCMLPLMFAMF. Topologically, residues 304–321 are cytoplasmic; that stretch reads GSLFRQRMAAWCKTICHC.

The protein belongs to the G-protein coupled receptor 1 family.

Its subcellular location is the host cell membrane. Its function is as follows. May be highly relevant to the process of cellular transformation and rapid T-cell proliferation effected by HVS during latent infections of T-cells in susceptible hosts. The protein is G-protein coupled receptor homolog ECRF3 (74) of Saimiri sciureus (Common squirrel monkey).